Here is a 202-residue protein sequence, read N- to C-terminus: Hydrogenase expression/formation protein HupD (202 aa).

Residues Glu28, Asp74, and His105 each coordinate Ni(2+).

Belongs to the peptidase A31 family.

Not known. Could be involved in the processing of hydrogenase. In Rhizobium leguminosarum bv. viciae, this protein is Hydrogenase expression/formation protein HupD (hupD).